Reading from the N-terminus, the 211-residue chain is Interleukin-6 (211 aa).

The first 29 residues, 1 to 29 (MNSLSTSAFSPVAFSLGLLLVMATAFPTP), serve as a signal peptide directing secretion. An intrachain disulfide couples Cys-71 to Cys-77. Ser-80 carries the post-translational modification Phosphoserine. Cys-100 and Cys-110 form a disulfide bridge.

It belongs to the IL-6 superfamily. As to quaternary structure, component of a hexamer of two molecules each of IL6, IL6R and IL6ST; first binds to IL6R to associate with the signaling subunit IL6ST. Interacts with IL6R (via the N-terminal ectodomain); this interaction may be affected by IL6R-binding with SORL1, hence decreasing IL6 cis signaling. Interacts with SORL1 (via the N-terminal ectodomain); this interaction leads to IL6 internalization and lysosomal degradation. May form a trimeric complex with the soluble SORL1 ectodomain and soluble IL6R receptor; this interaction might stabilize circulating IL6, hence promoting IL6 trans signaling.

It is found in the secreted. Its function is as follows. Cytokine with a wide variety of biological functions in immunity, tissue regeneration, and metabolism. Binds to IL6R, then the complex associates to the signaling subunit IL6ST/gp130 to trigger the intracellular IL6-signaling pathway. The interaction with the membrane-bound IL6R and IL6ST stimulates 'classic signaling', whereas the binding of IL6 and soluble IL6R to IL6ST stimulates 'trans-signaling'. Alternatively, 'cluster signaling' occurs when membrane-bound IL6:IL6R complexes on transmitter cells activate IL6ST receptors on neighboring receiver cells. In terms of biological role, IL6 is a potent inducer of the acute phase response. Rapid production of IL6 contributes to host defense during infection and tissue injury, but excessive IL6 synthesis is involved in disease pathology. In the innate immune response, is synthesized by myeloid cells, such as macrophages and dendritic cells, upon recognition of pathogens through toll-like receptors (TLRs) at the site of infection or tissue injury. In the adaptive immune response, is required for the differentiation of B cells into immunoglobulin-secreting cells. Plays a major role in the differentiation of CD4(+) T cell subsets. Essential factor for the development of T follicular helper (Tfh) cells that are required for the induction of germinal-center formation. Required to drive naive CD4(+) T cells to the Th17 lineage. Also required for proliferation of myeloma cells and the survival of plasmablast cells. Acts as an essential factor in bone homeostasis and on vessels directly or indirectly by induction of VEGF, resulting in increased angiogenesis activity and vascular permeability. Induces, through 'trans-signaling' and synergistically with IL1B and TNF, the production of VEGF. Involved in metabolic controls, is discharged into the bloodstream after muscle contraction increasing lipolysis and improving insulin resistance. 'Trans-signaling' in central nervous system also regulates energy and glucose homeostasis. Mediates, through GLP-1, crosstalk between insulin-sensitive tissues, intestinal L cells and pancreatic islets to adapt to changes in insulin demand. Also acts as a myokine. Plays a protective role during liver injury, being required for maintenance of tissue regeneration. Also has a pivotal role in iron metabolism by regulating HAMP/hepcidin expression upon inflammation or bacterial infection. Through activation of IL6ST-YAP-NOTCH pathway, induces inflammation-induced epithelial regeneration. This is Interleukin-6 (IL6) from Camelus bactrianus (Bactrian camel).